A 343-amino-acid chain; its full sequence is Phosphate acyltransferase (343 aa).

The protein belongs to the PlsX family. As to quaternary structure, homodimer. Probably interacts with PlsY.

It localises to the cytoplasm. It carries out the reaction a fatty acyl-[ACP] + phosphate = an acyl phosphate + holo-[ACP]. The protein operates within lipid metabolism; phospholipid metabolism. Catalyzes the reversible formation of acyl-phosphate (acyl-PO(4)) from acyl-[acyl-carrier-protein] (acyl-ACP). This enzyme utilizes acyl-ACP as fatty acyl donor, but not acyl-CoA. This is Phosphate acyltransferase from Acidovorax sp. (strain JS42).